We begin with the raw amino-acid sequence, 250 residues long: Aquaporin TIP2-1 (250 aa).

M1 carries the post-translational modification N-acetylmethionine. The Cytoplasmic portion of the chain corresponds to 1-20; that stretch reads MAGVAFGSFDDSFSLASLRA. A2 is modified (N-acetylalanine; in Aquaporin TIP2-1, N-terminally processed). Residues 21-41 form a helical membrane-spanning segment; the sequence is YLAEFISTLLFVFAGVGSAIA. Over 42–54 the chain is Vacuolar; sequence YAKLTSDAALDTP. A helical transmembrane segment spans residues 55-75; sequence GLVAIAVCHGFALFVAVAIGA. Residues 76 to 98 lie on the Cytoplasmic side of the membrane; it reads NISGGHVNPAVTFGLAVGGQITV. The NPA 1 motif lies at 83 to 85; the sequence is NPA. The helical transmembrane segment at 99–119 threads the bilayer; the sequence is ITGVFYWIAQLLGSTAACFLL. Topologically, residues 120–141 are vacuolar; that stretch reads KYVTGGLAVPTHSVAAGLGSIE. A helical membrane pass occupies residues 142–162; sequence GVVMEIIITFALVYTVYATAA. Residues 163–168 are Cytoplasmic-facing; the sequence is DPKKGS. Residues 169–189 traverse the membrane as a helical segment; sequence LGTIAPLAIGLIVGANILAAG. Residues 190–215 lie on the Vacuolar side of the membrane; that stretch reads PFSGGSMNPARSFGPAVAAGDFSGHW. Residues 197–199 carry the NPA 2 motif; that stretch reads NPA. A helical membrane pass occupies residues 216 to 236; sequence VYWVGPLIGGGLAGLIYGNVF. The Cytoplasmic segment spans residues 237 to 250; the sequence is MGSSEHVPLASADF.

It belongs to the MIP/aquaporin (TC 1.A.8) family. TIP (TC 1.A.8.10) subfamily. Interacts with cucumber mosaic virus (CMV) Protein 1a. As to expression, strongly expressed in shoot, rosette, bolt and flowers. Also expressed in roots, flower buds and above ground.

Its subcellular location is the vacuole membrane. In terms of biological role, aquaporin required to facilitate the transport of water from the vacuolar compartment to the cytoplasm. Does not promote glycerol permeability. Its function is impaired by Hg(2+). Transports urea in yeast cells and Xenopus laevis oocytes in a pH-independent manner. Transports methylammonium or ammonium in yeast cells and Xenopus laevis oocytes, preferentially at high medium pH. May participate in vacuolar compartmentation and detoxification of ammonium. The sequence is that of Aquaporin TIP2-1 (TIP2-1) from Arabidopsis thaliana (Mouse-ear cress).